Reading from the N-terminus, the 146-residue chain is Acidic phospholipase A2 S13-69J (146 aa).

Positions 1-19 are cleaved as a signal peptide; that stretch reads MYPAHLLVLLAVCVSLLGA. A propeptide spanning residues 20-27 is cleaved from the precursor; that stretch reads ASIPPQPL. 7 disulfides stabilise this stretch: C38–C98, C54–C145, C56–C72, C71–C126, C78–C119, C87–C112, and C105–C117. Positions 55, 57, and 59 each coordinate Ca(2+). H75 is an active-site residue. Residue D76 coordinates Ca(2+). D120 is an active-site residue.

This sequence belongs to the phospholipase A2 family. Group I subfamily. D49 sub-subfamily. The cofactor is Ca(2+). As to expression, expressed by the venom gland.

It localises to the secreted. The catalysed reaction is a 1,2-diacyl-sn-glycero-3-phosphocholine + H2O = a 1-acyl-sn-glycero-3-phosphocholine + a fatty acid + H(+). Functionally, snake venom phospholipase A2 (PLA2) that inhibits collagen-induced platelet aggregation. PLA2 catalyzes the calcium-dependent hydrolysis of the 2-acyl groups in 3-sn-phosphoglycerides. The polypeptide is Acidic phospholipase A2 S13-69J (Austrelaps superbus (Lowland copperhead snake)).